An 87-amino-acid chain; its full sequence is Small ribosomal subunit protein bS20 (87 aa).

The segment at 1–26 is disordered; sequence MANIKSAKKRAVQSEKARKHNASRRS.

The protein belongs to the bacterial ribosomal protein bS20 family.

Binds directly to 16S ribosomal RNA. This chain is Small ribosomal subunit protein bS20, found in Enterobacter sp. (strain 638).